The sequence spans 351 residues: 5-deoxyribose 1-phosphate isomerase (351 aa).

Residues 48–50 (RGA), R91, and Q198 contribute to the substrate site. D239 functions as the Proton donor in the catalytic mechanism. 249–250 (NK) contributes to the substrate binding site.

This sequence belongs to the EIF-2B alpha/beta/delta subunits family. DrdI subfamily.

It carries out the reaction 5-deoxy-alpha-D-ribose 1-phosphate = 5-deoxy-D-ribulose 1-phosphate. Its pathway is carbohydrate degradation. Its function is as follows. Catalyzes the isomerization of 5-deoxy-alpha-D-ribose 1-phosphate to 5-deoxy-D-ribulose 1-phosphate, as part of a 5-deoxyribose salvage pathway that recycles this toxic radical SAM enzyme by-product to mainstream metabolites. This Moorella thermoacetica (strain ATCC 39073 / JCM 9320) protein is 5-deoxyribose 1-phosphate isomerase.